Reading from the N-terminus, the 968-residue chain is RNA polymerase-associated protein RapA (968 aa).

Residues D164 to N334 enclose the Helicase ATP-binding domain. D177–T184 serves as a coordination point for ATP. The short motif at D280 to H283 is the DEAH box element. The Helicase C-terminal domain occupies R490–G662.

The protein belongs to the SNF2/RAD54 helicase family. RapA subfamily. In terms of assembly, interacts with the RNAP. Has a higher affinity for the core RNAP than for the holoenzyme. Its ATPase activity is stimulated by binding to RNAP.

In terms of biological role, transcription regulator that activates transcription by stimulating RNA polymerase (RNAP) recycling in case of stress conditions such as supercoiled DNA or high salt concentrations. Probably acts by releasing the RNAP, when it is trapped or immobilized on tightly supercoiled DNA. Does not activate transcription on linear DNA. Probably not involved in DNA repair. The sequence is that of RNA polymerase-associated protein RapA from Shigella flexneri serotype 5b (strain 8401).